The following is a 402-amino-acid chain: Serine/threonine transporter SstT (402 aa).

A run of 8 helical transmembrane segments spans residues 17-37 (IAIG…ITVI), 44-64 (FVGG…ANAL), 78-98 (IIVL…ISHY), 138-158 (ALSQ…GFAM), 179-199 (IVRW…FDTI), 212-232 (VLIL…NPII), 295-315 (MAGA…TLGI), and 336-356 (ASGI…LFGI).

It belongs to the dicarboxylate/amino acid:cation symporter (DAACS) (TC 2.A.23) family.

Its subcellular location is the cell membrane. It catalyses the reaction L-serine(in) + Na(+)(in) = L-serine(out) + Na(+)(out). The enzyme catalyses L-threonine(in) + Na(+)(in) = L-threonine(out) + Na(+)(out). Functionally, involved in the import of serine and threonine into the cell, with the concomitant import of sodium (symport system). This is Serine/threonine transporter SstT from Streptococcus thermophilus (strain CNRZ 1066).